Here is a 1386-residue protein sequence, read N- to C-terminus: YLP motif-containing protein 1 (1386 aa).

2 disordered regions span residues 1–336 (MYPN…EDAR) and 517–1068 (TSIP…PPGR). The span at 14–27 (YPPPPVPPPPPPVA) shows a compositional bias: pro residues. Low complexity-rich tracts occupy residues 31-50 (ASPG…SSSG) and 59-80 (LAQL…LQPH). 5 stretches are compositionally biased toward pro residues: residues 81–93 (HLPP…PPVM), 102–114 (QPPP…PPGP), 148–158 (PESPPVPPGSY), 166–176 (MPPPQPPPSYY), and 184–203 (YLPP…PPSI). The segment covering 237–259 (STMTPQEQQQYWYRQHLLSLQQR) has biased composition (polar residues). Over residues 260-270 (TKVHLPGHKKG) the composition is skewed to basic residues. Basic and acidic residues predominate over residues 276-285 (DVPEPIKEEA). A compositionally biased stretch (pro residues) spans 302–317 (PPLPPPNEEAPPPLSP). Residues 320–333 (PQSEDSEDSEDSEE) are compositionally biased toward acidic residues. Composition is skewed to pro residues over residues 517–558 (TSIP…PPPA), 566–603 (PVLP…PQGM), and 641–650 (PPSPYHPPPQ). Polar residues predominate over residues 651 to 667 (SEQVNSKPLNKVFSSEQ). Residue Lys683 is modified to N6-methyllysine. Basic and acidic residues predominate over residues 706–722 (RGPREQKEQLQKLKDFG). Residues 746-761 (MYPPPGSYRPPPPMGK) are compositionally biased toward pro residues. Residues 762-779 (PPGSIVRPSAPPARSSIP) are compositionally biased toward low complexity. Composition is skewed to pro residues over residues 781–803 (TRPP…PPPV) and 848–878 (PVLP…PPPV). Lys894 participates in a covalent cross-link: Glycyl lysine isopeptide (Lys-Gly) (interchain with G-Cter in SUMO2). Composition is skewed to basic and acidic residues over residues 904–938 (ITLR…EPYF), 945–1014 (TDHR…DRPP), 1023–1033 (GERRTYPEERM), and 1049–1068 (RVEK…PPGR). Lys951 is covalently cross-linked (Glycyl lysine isopeptide (Lys-Gly) (interchain with G-Cter in SUMO2)). The interval 1336–1343 (KKRVRWAD) is involved in interaction with PPP1CA.

In terms of assembly, interacts with PPP1CA and NCOA5. Forms a complex with ILF2, ILF3, KHDRBS1, RBMX, NCOA5 and PPP1CA.

The protein resides in the nucleus. Its subcellular location is the nucleus speckle. Its function is as follows. Plays a role in the reduction of telomerase activity during differentiation of embryonic stem cells by binding to the core promoter of TERT and controlling its down-regulation. This is YLP motif-containing protein 1 (Ylpm1) from Mus musculus (Mouse).